The following is a 475-amino-acid chain: Cysteine--tRNA ligase (475 aa).

Residue cysteine 28 participates in Zn(2+) binding. A 'HIGH' region motif is present at residues 30–40 (PTVYDETHIGH). Zn(2+)-binding residues include cysteine 208, histidine 233, and glutamate 237. Residues 265 to 269 (KMSKS) carry the 'KMSKS' region motif. Residue lysine 268 coordinates ATP.

This sequence belongs to the class-I aminoacyl-tRNA synthetase family. The cofactor is Zn(2+).

Its subcellular location is the cytoplasm. It catalyses the reaction tRNA(Cys) + L-cysteine + ATP = L-cysteinyl-tRNA(Cys) + AMP + diphosphate. The sequence is that of Cysteine--tRNA ligase from Methanococcus vannielii (strain ATCC 35089 / DSM 1224 / JCM 13029 / OCM 148 / SB).